A 1332-amino-acid chain; its full sequence is Xanthine dehydrogenase/oxidase (1332 aa).

The 2Fe-2S ferredoxin-type domain maps to 4-91 (DELVFFVNGK…HVAVTTVEGI (88 aa)). Cysteine 43, cysteine 48, cysteine 51, cysteine 73, cysteine 113, cysteine 116, cysteine 148, and cysteine 150 together coordinate [2Fe-2S] cluster. The FAD-binding PCMH-type domain occupies 229 to 414 (FEGERVTWIQ…LSIEIPYSRE (186 aa)). FAD is bound by residues 257–264 (LVVGNTEI), phenylalanine 337, 347–351 (SLGGN), aspartate 360, leucine 404, and lysine 422. Cysteines 535 and 992 form a disulfide. Glutamine 767 and phenylalanine 798 together coordinate Mo-molybdopterin. 2 residues coordinate substrate: glutamate 802 and arginine 880. Arginine 912 contributes to the Mo-molybdopterin binding site. Substrate is bound by residues phenylalanine 914 and threonine 1010. Alanine 1079 is a Mo-molybdopterin binding site. Glutamate 1261 serves as the catalytic Proton acceptor.

This sequence belongs to the xanthine dehydrogenase family. Homodimer. Interacts with BTN1A1. [2Fe-2S] cluster is required as a cofactor. The cofactor is FAD. Requires Mo-molybdopterin as cofactor. Post-translationally, subject to partial proteolysis; this alters the enzyme from the dehydrogenase form (D) to the oxidase form (O). Contains sulfhydryl groups that are easily oxidized (in vitro); this alters the enzyme from the dehydrogenase form (D) to the oxidase form (O). Detected in milk (at protein level).

It localises to the cytoplasm. Its subcellular location is the peroxisome. The protein localises to the secreted. The catalysed reaction is xanthine + NAD(+) + H2O = urate + NADH + H(+). The enzyme catalyses hypoxanthine + NAD(+) + H2O = xanthine + NADH + H(+). It carries out the reaction xanthine + O2 + H2O = urate + H2O2. Its activity is regulated as follows. Can be converted from the dehydrogenase form (D) to the oxidase form (O) irreversibly by proteolysis or reversibly through the oxidation of sulfhydryl groups. In terms of biological role, key enzyme in purine degradation. Catalyzes the oxidation of hypoxanthine to xanthine. Catalyzes the oxidation of xanthine to uric acid. Contributes to the generation of reactive oxygen species. In Bos taurus (Bovine), this protein is Xanthine dehydrogenase/oxidase (XDH).